A 938-amino-acid chain; its full sequence is Microperfuranone synthase (938 aa).

The interval 44–445 is adenylation (A) domain; it reads TSTRISYAEL…AGRTKDTIIV (402 aa). Residues 579 to 655 form the Carrier domain; it reads SDSERAVQKA…AIARSIDSSR (77 aa). Residues 581–652 are thiolation and peptide carrier (T) domain; it reads SERAVQKALV…TPGAIARSID (72 aa). Ser613 bears the O-(pantetheine 4'-phosphoryl)serine mark. The interval 676 to 923 is thioesterase (TE) domain; sequence PLFCIHPGSG…AKMLNREHIA (248 aa). Ser746 is an active-site residue.

The protein belongs to the ATP-dependent AMP-binding enzyme family.

Its pathway is secondary metabolite biosynthesis. Its function is as follows. Microperfuranone synthase is the only protein required for the biosynthesis of the secondary metabolite microperfuranone from phenylpyruvic acid (PPA). Several steps for the microperfuranione biosynthesis have been proposed. These steps include the activation of PPA, by the micA adenylation (A) domain to AMP-phenylpyruvic acid followed by loading of the PPA unit to the thiolation and peptide carrier (T) domain and eventually transferring to the thioesterase (TE) domain. After loading another PPA unit onto the T domain, aldol condensation establishes the carbon-carbon bond between the alpha- and beta-carbon of the two PPA units. Sulfur-assisted furan ring formation, TE domain mediated hydrolysis, decarboxylation, and keto-enol tautomerization would generate microperfuranone attached to the T domain. Finally, microperfuranone is released by the TE domain. The chain is Microperfuranone synthase from Emericella nidulans (strain FGSC A4 / ATCC 38163 / CBS 112.46 / NRRL 194 / M139) (Aspergillus nidulans).